A 190-amino-acid polypeptide reads, in one-letter code: MKCIVGLGNIGKRFELTRHNIGFEVVDYILEKNNFSLDKQKFKGAYTIERMNGDKVLFIEPMTMMNLSGEAVAPIMDYYNVNPEDLIVLYDDLDLEQGQVRLRQKGSAGGHNGMKSIIKMLGTDQFKRIRIGVGRPTNGMTVPDYVLQRFSNDEMVTMEKVIEHAARAIEKFVETSRFDHVMNEFNGEVK.

Phenylalanine 14 contributes to the tRNA binding site. Histidine 19 serves as the catalytic Proton acceptor. TRNA contacts are provided by methionine 64, asparagine 66, and asparagine 112.

The protein belongs to the PTH family. As to quaternary structure, monomer.

The protein localises to the cytoplasm. It carries out the reaction an N-acyl-L-alpha-aminoacyl-tRNA + H2O = an N-acyl-L-amino acid + a tRNA + H(+). Hydrolyzes ribosome-free peptidyl-tRNAs (with 1 or more amino acids incorporated), which drop off the ribosome during protein synthesis, or as a result of ribosome stalling. Its function is as follows. Catalyzes the release of premature peptidyl moieties from peptidyl-tRNA molecules trapped in stalled 50S ribosomal subunits, and thus maintains levels of free tRNAs and 50S ribosomes. The protein is Peptidyl-tRNA hydrolase of Staphylococcus aureus (strain Mu3 / ATCC 700698).